The primary structure comprises 469 residues: UDP-glycosyltransferase 75B1 (469 aa).

H16 functions as the Proton acceptor in the catalytic mechanism. H16 is a binding site for an anthocyanidin. The UDP-alpha-D-glucose site is built by Q334, H349, W352, S354, E357, D373, and Q374.

It belongs to the UDP-glycosyltransferase family. Interacts with CALS1, ROP1 and phragmoplastin.

Its subcellular location is the cytoplasm. The protein localises to the perinuclear region. The protein resides in the cytoskeleton. It is found in the phragmoplast. The catalysed reaction is (indol-3-yl)acetate + UDP-alpha-D-glucose = 1-O-(indol-3-ylacetyl)-beta-D-glucose + UDP. It participates in plant hormone metabolism; auxin conjugation. Possesses low catalytic activity on indole-3-acetic acid (IAA) in vitro. May transfer UDP-glucose from sucrose synthase to callose synthase for the synthesis of callose at the forming cell plate during cytokinesis. Has high affinity for 4-aminobenzoate. Catalyzes the formation of 4-aminobenzoate glucose ester which represents a storage form of 4-aminobenzoate in the vacuole. Is the major source of this activity in the plant. Also active in vitro on benzoates and benzoate derivatives. In Arabidopsis thaliana (Mouse-ear cress), this protein is UDP-glycosyltransferase 75B1 (UGT75B1).